Here is a 213-residue protein sequence, read N- to C-terminus: ATP phosphoribosyltransferase (213 aa).

The protein belongs to the ATP phosphoribosyltransferase family. Short subfamily. In terms of assembly, heteromultimer composed of HisG and HisZ subunits.

Its subcellular location is the cytoplasm. The enzyme catalyses 1-(5-phospho-beta-D-ribosyl)-ATP + diphosphate = 5-phospho-alpha-D-ribose 1-diphosphate + ATP. Its pathway is amino-acid biosynthesis; L-histidine biosynthesis; L-histidine from 5-phospho-alpha-D-ribose 1-diphosphate: step 1/9. Functionally, catalyzes the condensation of ATP and 5-phosphoribose 1-diphosphate to form N'-(5'-phosphoribosyl)-ATP (PR-ATP). Has a crucial role in the pathway because the rate of histidine biosynthesis seems to be controlled primarily by regulation of HisG enzymatic activity. The protein is ATP phosphoribosyltransferase of Listeria monocytogenes serotype 4b (strain F2365).